The sequence spans 575 residues: Major outer membrane protein MspA (575 aa).

An N-terminal signal peptide occupies residues 1-19 (MKKALVFFVALAMIGSVFA).

Its subcellular location is the cell outer membrane. Major component of the outer membrane sheath. This chain is Major outer membrane protein MspA (mspA), found in Treponema maltophilum.